The sequence spans 172 residues: Exocyst complex component 1-like (172 aa).

The sequence is that of Exocyst complex component 1-like from Mus musculus (Mouse).